Reading from the N-terminus, the 3343-residue chain is Breast cancer type 2 susceptibility protein homolog (3343 aa).

The interaction with PALB2 stretch occupies residues 1–40 (MTVEYKRRPTFWEIFKARCSTADLGPISLNWFEELFSEAP). Residues 40–60 (PPYNTEHPEESEYKPQGHEPQ) form a disordered region. The span at 45 to 56 (EHPEESEYKPQG) shows a compositional bias: basic and acidic residues. Serine 70 is subject to Phosphoserine. A disordered region spans residues 348–381 (IEPRDSEPLDPSVTNQKPLYSQSGDISSEAGQCS). Positions 359–381 (SVTNQKPLYSQSGDISSEAGQCS) are enriched in polar residues. 2 positions are modified to phosphoserine: serine 475 and serine 736. The interaction with NPM1 stretch occupies residues 622–982 (PDSSIKRSNL…DKWSEFLDPL (361 aa)). BRCA2 repeat units follow at residues 984-1018 (NHKLGGSFRTASNKEIKLSEDNVKKSKMFFKDIEE), 1197-1231 (KEMEFGGFCSALGTKLSVSNEALRKAMKLFSDIEN), 1405-1439 (MKEFNISFQTASGKNIRVSKESLNKSVNILDQETE), 1503-1537 (KEPTLLSFHTASGKKVKIMQESLDKVKNLFDETQY), 1645-1669 (CYTGDSRKTCVGESSLSKGKKWLRE), 1828-1845 (FITTHSQETVRMKEIFTD), 1939-1973 (PSRTYGFFSTASGKAVQVSDASLEKARQVFSEIDG), and 2019-2053 (SSFVFSGFSTAGGKLVTVSESALHKVKGMLEEFDL). The interval 985–2050 (HKLGGSFRTA…LHKVKGMLEE (1066 aa)) is interaction with RAD51. Disordered stretches follow at residues 2059 to 2138 (TLQH…VLGT), 2297 to 2356 (PFCS…SDKS), and 2377 to 2407 (DSKNVNLEGKNQKSADGVSEDGNDSDFPQFN). Serine 2063 carries the phosphoserine modification. Polar residues-rich tracts occupy residues 2083–2094 (PEYSVSSKLQKT) and 2101–2125 (SPSNYKESGSSGNTQSLEVSPQLSQ). The interaction with HSF2BP stretch occupies residues 2233–2300 (RKRGGMAGVA…EPVTCGPFCS (68 aa)). Polar residues-rich tracts occupy residues 2307-2320 (TQSPHVTSPAQGLQ) and 2332-2342 (GKSSSNPTVSA). The interaction with FANCD2 stretch occupies residues 2313-2475 (TSPAQGLQSK…SPKQLYMYGV (163 aa)). A compositionally biased stretch (basic and acidic residues) spans 2344 to 2356 (RSERTRHSVSDKS). The interaction with SEM1 stretch occupies residues 2411–2762 (MSSLQNARDL…QRVYPLQWVE (352 aa)). The short motif at 2612–2628 (AAKTLVLCVSDIISLST) is the Nuclear export signal; masked by interaction with SEM1 element. A disordered region spans residues 3114-3163 (DSPKWSTPNKDPTREPYPASTCSASDLASGGQLPRSSPTDQQSYRSPLSC). Residues 3147 to 3163 (PRSSPTDQQSYRSPLSC) are compositionally biased toward polar residues. Serine 3222 is subject to Phosphoserine; by CDK1 and CDK2. Disordered regions lie at residues 3231 to 3255 (PPRSCGTKYPTPLKKEGPSSPWSRA) and 3289 to 3343 (VGGS…PDYS). Serine 3250 carries the phosphoserine modification. Over residues 3295 to 3310 (VFPSDSTRTEGPSAST) the composition is skewed to polar residues. Over residues 3318–3334 (SKRESLRDCRDDSDGKL) the composition is skewed to basic and acidic residues.

As to quaternary structure, monomer and dimer. Interacts with RAD51; regulates RAD51 recruitment and function at sites of DNA repair. Interacts with SEM1, WDR16, USP11, DMC1, ROCK2 and NPM1. Interacts with both nonubiquitinated and monoubiquitinated FANCD2; this complex also includes XRCC3 and phosphorylated FANCG. Part of a BRCA complex containing BRCA1, BRCA2 and PALB2. Component of the homologous recombination repair (HR) complex composed of ERCC5/XPG, BRCA2, PALB2, DSS1 and RAD51. Within the complex, interacts with ERCC5/XPG and PALB2. Interacts directly with PALB2 which may serve as a scaffold for a HR complex containing PALB2, BRCA2, RAD51C, RAD51 and XRCC3. Interacts with BRCA1 only in the presence of PALB2 which serves as the bridging protein. Interacts with POLH; the interaction is direct. Interacts with the TREX-2 complex subunits PCID2 and SEM1. Interacts with HSF2BP and BRME1; the interaction with HSF2BP is direct and allows the formation of a ternary complex. The complex BRME1:HSF2BP:BRCA2 interacts with SPATA22, MEIOB and RAD51. Phosphorylated by ATM upon irradiation-induced DNA damage. Phosphorylation by CHEK1 and CHEK2 regulates interaction with RAD51. Phosphorylation at Ser-3222 by CDK1 and CDK2 is low in S phase when recombination is active, but increases as cells progress towards mitosis; this phosphorylation prevents homologous recombination-dependent repair during S phase and G2 by inhibiting RAD51 binding. Post-translationally, ubiquitinated in the absence of DNA damage; this does not lead to proteasomal degradation. In contrast, ubiquitination in response to DNA damage leads to proteasomal degradation. As to expression, highest expression in testis. Also expressed in spleen, skeletal muscle, thymus, mammary gland, heart, ovary, prostate, liver, lung, kidney and brain.

The protein resides in the nucleus. The protein localises to the cytoplasm. It localises to the cytoskeleton. Its subcellular location is the microtubule organizing center. It is found in the centrosome. Its function is as follows. Involved in double-strand break repair and/or homologous recombination. Binds RAD51 and potentiates recombinational DNA repair by promoting assembly of RAD51 onto single-stranded DNA (ssDNA). Acts by targeting RAD51 to ssDNA over double-stranded DNA, enabling RAD51 to displace replication protein-A (RPA) from ssDNA and stabilizing RAD51-ssDNA filaments by blocking ATP hydrolysis. Part of a PALB2-scaffolded HR complex containing RAD51C and which is thought to play a role in DNA repair by HR. May participate in S phase checkpoint activation. Binds selectively to ssDNA, and to ssDNA in tailed duplexes and replication fork structures. May play a role in the extension step after strand invasion at replication-dependent DNA double-strand breaks; together with PALB2 is involved in both POLH localization at collapsed replication forks and DNA polymerization activity. In concert with NPM1, regulates centrosome duplication. Interacts with the TREX-2 complex (transcription and export complex 2) subunits PCID2 and SEM1, and is required to prevent R-loop-associated DNA damage and thus transcription-associated genomic instability, independently of its known role in homologous recombination. This chain is Breast cancer type 2 susceptibility protein homolog, found in Rattus norvegicus (Rat).